The chain runs to 369 residues: MYGRSGLDRFKKSQTSEPFSVSANPPPVVQQHLSPEALSGQKTQIGAGQSNWHPPDWAIEPRAGVYSLEVVKDGQILDRIHLDRRRHIFGRQHQTCDFVLDHQSVSRQHAAVVPHKNGSIFVIDLGSAHGTFVANERLTKDTPVELEVGQSLRFAASTRIYLLRKNSEALFSRPPPPAEIKLPPPPDASDEEAVVAYNTLLNRYGLSNGESGGMLGKRKEKTGSEAGVAKRMKKVRVSFRDQLGGELAEIVGMSDGADVETEPGPINVKEGSLVGKYESLVRVTLIPKGKVKEEKAFTGGTRGGVTDRLQEAMNMLKRGPKTGIYDDLYGGDSLAKAVGTSWASVSQPAAETECGGVGEEDDNDDLFGD.

Over residues 1-11 (MYGRSGLDRFK) the composition is skewed to basic and acidic residues. Residues 1 to 26 (MYGRSGLDRFKKSQTSEPFSVSANPP) are disordered. The segment covering 13–23 (SQTSEPFSVSA) has biased composition (polar residues). Residues 87–138 (HIFGRQHQTCDFVLDHQSVSRQHAAVVPHKNGSIFVIDLGSAHGTFVANERL) form the FHA domain. Residues 345–369 (VSQPAAETECGGVGEEDDNDDLFGD) are disordered. Residues 358 to 369 (GEEDDNDDLFGD) show a composition bias toward acidic residues.

Interacts with human protein phosphatase PPP1C.

Functionally, inhibitor of protein-phosphatase 1 (PP1). Binds to and inhibits PP1 activity. The sequence is that of Protein phosphatase 1 regulatory inhibitor subunit PPP1R8 homolog from Arabidopsis thaliana (Mouse-ear cress).